A 238-amino-acid polypeptide reads, in one-letter code: Segregation and condensation protein A (238 aa).

It belongs to the ScpA family. In terms of assembly, component of a cohesin-like complex composed of ScpA, ScpB and the Smc homodimer, in which ScpA and ScpB bind to the head domain of Smc. The presence of the three proteins is required for the association of the complex with DNA.

The protein localises to the cytoplasm. Functionally, participates in chromosomal partition during cell division. May act via the formation of a condensin-like complex containing Smc and ScpB that pull DNA away from mid-cell into both cell halves. The protein is Segregation and condensation protein A of Macrococcus caseolyticus (strain JCSC5402) (Macrococcoides caseolyticum).